Reading from the N-terminus, the 108-residue chain is Small ribosomal subunit protein eS25w (108 aa).

Residues 1–36 are disordered; sequence MAPKKDKVPPPSSKPAKSGGGKQKKKKWSKGKQKEK. Over residues 22 to 31 the composition is skewed to basic residues; sequence KQKKKKWSKG.

This sequence belongs to the eukaryotic ribosomal protein eS25 family.

This chain is Small ribosomal subunit protein eS25w (RPS25E), found in Arabidopsis thaliana (Mouse-ear cress).